Reading from the N-terminus, the 668-residue chain is Probable syringafactin export ATP-binding/permease protein SyfD (668 aa).

The 239-residue stretch at 22-260 folds into the ABC transporter domain; the sequence is LRLQQVSRSF…APEAQPATPP (239 aa). Residue 58–65 coordinates ATP; sequence GASGSGKS. The tract at residues 242 to 263 is disordered; sequence RRTAQTTQPAPEAQPATPPGPA. The segment covering 245–256 has biased composition (low complexity); the sequence is AQTTQPAPEAQP. 5 consecutive transmembrane segments (helical) span residues 267 to 287, 293 to 313, 541 to 561, 602 to 622, and 631 to 651; these read LLASLGLFREAFNMAWIALIS, LLTMLGIIIGITSVVSISAIG, LTLLLSLIAVISLVVGGIGVM, MGGVIGIGLSYAIGYLFTLFV, and LASVVTAFACSTLIGVLFGFV.

The protein belongs to the ABC transporter superfamily. Macrolide exporter (TC 3.A.1.122) family. Probably part of a tripartite efflux system, which is composed of an inner membrane transporter, a periplasmic membrane fusion protein, and an outer membrane component.

It localises to the cell inner membrane. Functionally, probably involved in the export of syringafactins. This Pseudomonas syringae pv. tomato (strain ATCC BAA-871 / DC3000) protein is Probable syringafactin export ATP-binding/permease protein SyfD.